We begin with the raw amino-acid sequence, 511 residues long: AMP phosphorylase (511 aa).

Residues Gly-168, 194-199 (SRAITS), and Thr-203 contribute to the AMP site. Residue Asp-256 is the Proton donor of the active site. Residues Ser-262 and Lys-286 each coordinate AMP.

The protein belongs to the thymidine/pyrimidine-nucleoside phosphorylase family. Type 2 subfamily.

It carries out the reaction AMP + phosphate = alpha-D-ribose 1,5-bisphosphate + adenine. It catalyses the reaction CMP + phosphate = cytosine + alpha-D-ribose 1,5-bisphosphate. The catalysed reaction is UMP + phosphate = alpha-D-ribose 1,5-bisphosphate + uracil. Functionally, catalyzes the conversion of AMP and phosphate to adenine and ribose 1,5-bisphosphate (R15P). Exhibits phosphorylase activity toward CMP and UMP in addition to AMP. Functions in an archaeal AMP degradation pathway, together with R15P isomerase and RubisCO. This Thermofilum pendens (strain DSM 2475 / Hrk 5) protein is AMP phosphorylase.